A 242-amino-acid polypeptide reads, in one-letter code: ATP synthase subunit a, organellar chromatophore (242 aa).

Helical transmembrane passes span 28 to 48, 89 to 109, 128 to 148, 193 to 213, and 214 to 234; these read LHGQ…VLVI, LPFI…GALV, INTT…AGLS, LVVG…AMFL, and GLFT…NYIG.

This sequence belongs to the ATPase A chain family. As to quaternary structure, F-type ATPases have 2 components, CF(1) - the catalytic core - and CF(0) - the membrane proton channel. CF(1) has five subunits: alpha(3), beta(3), gamma(1), delta(1), epsilon(1). CF(0) has four main subunits: a, b, b' and c.

Its subcellular location is the plastid. It is found in the organellar chromatophore thylakoid membrane. Functionally, key component of the proton channel; it plays a direct role in the translocation of protons across the membrane. The protein is ATP synthase subunit a, organellar chromatophore of Paulinella chromatophora.